The sequence spans 176 residues: Respiratory supercomplex factor 1, mitochondrial (176 aa).

An HIG1 domain is found at 6–97 (VPSSFEGNPQ…TERQQRKEFE (92 aa)). The next 2 helical transmembrane spans lie at 33–49 (PLIP…LYRA) and 69–86 (IYAQ…GMYF). The disordered stretch occupies residues 129 to 158 (RHAAMEAAAAEAGKKTAPHDAARSAIERSE). Basic and acidic residues predominate over residues 140–158 (AGKKTAPHDAARSAIERSE).

This sequence belongs to the RCF1 family. As to quaternary structure, associates with the respiratory chain complex III/complex IV supercomplex.

It is found in the mitochondrion membrane. In terms of biological role, cytochrome c oxidase subunit which plays a role in assembly of respiratory supercomplexes. The sequence is that of Respiratory supercomplex factor 1, mitochondrial (rcf1) from Aspergillus flavus (strain ATCC 200026 / FGSC A1120 / IAM 13836 / NRRL 3357 / JCM 12722 / SRRC 167).